A 138-amino-acid polypeptide reads, in one-letter code: Membrane protein P8A7 (138 aa).

4 consecutive transmembrane segments (helical) span residues 12-30 (ILVI…YLFV), 32-56 (GLFH…IVLL), 71-90 (YTYW…LILG), and 93-118 (GFFL…LLGC).

The protein localises to the membrane. The polypeptide is Membrane protein P8A7 (pmpA) (Dictyostelium discoideum (Social amoeba)).